The sequence spans 470 residues: ATP synthase subunit beta (470 aa).

Residue 155–162 (GGAGVGKT) participates in ATP binding.

It belongs to the ATPase alpha/beta chains family. F-type ATPases have 2 components, CF(1) - the catalytic core - and CF(0) - the membrane proton channel. CF(1) has five subunits: alpha(3), beta(3), gamma(1), delta(1), epsilon(1). CF(0) has three main subunits: a(1), b(2) and c(9-12). The alpha and beta chains form an alternating ring which encloses part of the gamma chain. CF(1) is attached to CF(0) by a central stalk formed by the gamma and epsilon chains, while a peripheral stalk is formed by the delta and b chains.

It localises to the cell membrane. The enzyme catalyses ATP + H2O + 4 H(+)(in) = ADP + phosphate + 5 H(+)(out). Its function is as follows. Produces ATP from ADP in the presence of a proton gradient across the membrane. The catalytic sites are hosted primarily by the beta subunits. The protein is ATP synthase subunit beta of Staphylococcus saprophyticus subsp. saprophyticus (strain ATCC 15305 / DSM 20229 / NCIMB 8711 / NCTC 7292 / S-41).